A 513-amino-acid chain; its full sequence is ATP synthase subunit alpha (513 aa).

169–176 (GDRQTGKT) contributes to the ATP binding site.

It belongs to the ATPase alpha/beta chains family. As to quaternary structure, F-type ATPases have 2 components, CF(1) - the catalytic core - and CF(0) - the membrane proton channel. CF(1) has five subunits: alpha(3), beta(3), gamma(1), delta(1), epsilon(1). CF(0) has three main subunits: a(1), b(2) and c(9-12). The alpha and beta chains form an alternating ring which encloses part of the gamma chain. CF(1) is attached to CF(0) by a central stalk formed by the gamma and epsilon chains, while a peripheral stalk is formed by the delta and b chains.

Its subcellular location is the cell inner membrane. The enzyme catalyses ATP + H2O + 4 H(+)(in) = ADP + phosphate + 5 H(+)(out). Its function is as follows. Produces ATP from ADP in the presence of a proton gradient across the membrane. The alpha chain is a regulatory subunit. The polypeptide is ATP synthase subunit alpha (Shewanella amazonensis (strain ATCC BAA-1098 / SB2B)).